Consider the following 449-residue polypeptide: Galactosyl transferase CpsE (449 aa).

5 helical membrane passes run 5 to 22, 27 to 46, 59 to 78, 88 to 107, and 258 to 280; these read VVVYFSASLTLTLITPNF, DLLFVLLIHYIVFYLSDFYR, MVLKYSFYYIFISSSLFFIF, SFFTFIAMNSILLYLLNSFL, and FLDITGAIIGLLICGIVAIFLVP.

Belongs to the bacterial sugar transferase family.

Its subcellular location is the cell membrane. In terms of biological role, galactosyl transferase is essential for the assembly of the group B streptococci (GBS) type III capsular polysaccharide. May be involved in the formation of either or both galactosidic bonds by catalyzing the addition of galactose to an oligosaccharide precursor or to a lipid intermediate. Type III capsular polysaccharide consists of a linear backbone with short side chains ending in residues of N-acetylneuraminic acid or sialic acid. The presence of sialic acid on the surface of the organism inhibits activation of the alternative pathway of complement and is thought to be an important element in the virulence function of the capsule. This chain is Galactosyl transferase CpsE (cpsE), found in Streptococcus agalactiae serotype III (strain NEM316).